Here is a 230-residue protein sequence, read N- to C-terminus: 5'-methylthioadenosine/S-adenosylhomocysteine nucleosidase (230 aa).

Catalysis depends on Glu-12, which acts as the Proton acceptor. Residues Gly-78, Ile-153, and 174 to 175 (ME) contribute to the substrate site. Catalysis depends on Asp-198, which acts as the Proton donor.

Belongs to the PNP/UDP phosphorylase family. MtnN subfamily.

The enzyme catalyses S-adenosyl-L-homocysteine + H2O = S-(5-deoxy-D-ribos-5-yl)-L-homocysteine + adenine. The catalysed reaction is S-methyl-5'-thioadenosine + H2O = 5-(methylsulfanyl)-D-ribose + adenine. It catalyses the reaction 5'-deoxyadenosine + H2O = 5-deoxy-D-ribose + adenine. It participates in amino-acid biosynthesis; L-methionine biosynthesis via salvage pathway; S-methyl-5-thio-alpha-D-ribose 1-phosphate from S-methyl-5'-thioadenosine (hydrolase route): step 1/2. Catalyzes the irreversible cleavage of the glycosidic bond in both 5'-methylthioadenosine (MTA) and S-adenosylhomocysteine (SAH/AdoHcy) to adenine and the corresponding thioribose, 5'-methylthioribose and S-ribosylhomocysteine, respectively. Also cleaves 5'-deoxyadenosine, a toxic by-product of radical S-adenosylmethionine (SAM) enzymes, into 5-deoxyribose and adenine. The sequence is that of 5'-methylthioadenosine/S-adenosylhomocysteine nucleosidase from Shewanella denitrificans (strain OS217 / ATCC BAA-1090 / DSM 15013).